Reading from the N-terminus, the 651-residue chain is Mediator of RNA polymerase II transcription subunit 17 (651 aa).

The disordered stretch occupies residues 51 to 83 (QGSGSEEEEAAGAEGDAQDWAGAGSSADQDDEE). The span at 62–74 (GAEGDAQDWAGAG) shows a compositional bias: low complexity.

The protein belongs to the Mediator complex subunit 17 family. As to quaternary structure, component of the Mediator complex, which is composed of MED1, MED4, MED6, MED7, MED8, MED9, MED10, MED11, MED12, MED13, MED13L, MED14, MED15, MED16, MED17, MED18, MED19, MED20, MED21, MED22, MED23, MED24, MED25, MED26, MED27, MED29, MED30, MED31, CCNC, CDK8 and CDC2L6/CDK11. The MED12, MED13, CCNC and CDK8 subunits form a distinct module termed the CDK8 module. Mediator containing the CDK8 module is less active than Mediator lacking this module in supporting transcriptional activation. Individual preparations of the Mediator complex lacking one or more distinct subunits have been variously termed ARC, CRSP, DRIP, PC2, SMCC and TRAP. Interacts with GATA1, PPARG and STAT2.

It localises to the nucleus. Functionally, component of the Mediator complex, a coactivator involved in the regulated transcription of nearly all RNA polymerase II-dependent genes. Mediator functions as a bridge to convey information from gene-specific regulatory proteins to the basal RNA polymerase II transcription machinery. Mediator is recruited to promoters by direct interactions with regulatory proteins and serves as a scaffold for the assembly of a functional preinitiation complex with RNA polymerase II and the general transcription factors. The sequence is that of Mediator of RNA polymerase II transcription subunit 17 (MED17) from Bos taurus (Bovine).